We begin with the raw amino-acid sequence, 388 residues long: Succinate--CoA ligase [ADP-forming] subunit beta (388 aa).

The ATP-grasp domain occupies K9–H244. ATP-binding positions include K46, G53–G55, E99, T102, and E107. N199 and D213 together coordinate Mg(2+). Substrate-binding positions include N264 and G321–V323.

It belongs to the succinate/malate CoA ligase beta subunit family. In terms of assembly, heterotetramer of two alpha and two beta subunits. Mg(2+) serves as cofactor.

The catalysed reaction is succinate + ATP + CoA = succinyl-CoA + ADP + phosphate. It catalyses the reaction GTP + succinate + CoA = succinyl-CoA + GDP + phosphate. Its pathway is carbohydrate metabolism; tricarboxylic acid cycle; succinate from succinyl-CoA (ligase route): step 1/1. Its function is as follows. Succinyl-CoA synthetase functions in the citric acid cycle (TCA), coupling the hydrolysis of succinyl-CoA to the synthesis of either ATP or GTP and thus represents the only step of substrate-level phosphorylation in the TCA. The beta subunit provides nucleotide specificity of the enzyme and binds the substrate succinate, while the binding sites for coenzyme A and phosphate are found in the alpha subunit. The sequence is that of Succinate--CoA ligase [ADP-forming] subunit beta from Edwardsiella ictaluri (strain 93-146).